Here is a 418-residue protein sequence, read N- to C-terminus: MESLTDPSKLDSGKEPHISLIPNKQDRTLTIVDTGIGMTKADLINNLGTITKSETKVFMEVLQAGADISMIGQFSVGFYSAYSVAEKVTVITKHNNDEQYAWESSLRGSFTEYREFYKSLTINWEDYLAVKHFSVEGQLEFRAFLFVPRLAPFELLETRKKKNKIKLSARRDLIMDNCEELIPEYLNFIRGVVDSEDLPLNIFRETKDQVANSTIVQRLWKHGLEVIYTIEPIDEYCVQQLKEFEGKTLVSVTKEDLELPEDEEEKKKQEEGKQKTKQKKNQSLRTSAKSTYGWTANMERIMKAQALRDNSTTGYMAAKKHLEINPDHSFIDTLRQKAETDKNDKSVKDLVILLYETALLSSDFGLEGPQTHANRIYRMNKLGLGTDEDDPTADDTSAAVTEEMPPLEGDDDTSRMEK.

Positions 33, 52, 78, and 204 each coordinate ATP. Disordered regions lie at residues 255–289 (EDLELPEDEEEKKKQEEGKQKTKQKKNQSLRTSAK) and 383–418 (GLGTDEDDPTADDTSAAVTEEMPPLEGDDDTSRMEK). The segment covering 265 to 274 (EKKKQEEGKQ) has biased composition (basic and acidic residues).

This sequence belongs to the heat shock protein 90 family. As to quaternary structure, homodimer.

Its subcellular location is the cytoplasm. Functionally, putative molecular chaperone that may promote the maturation, structural maintenance and proper regulation of specific target proteins. The sequence is that of Putative heat shock protein HSP 90-alpha A4 (HSP90AA4P) from Homo sapiens (Human).